Here is a 689-residue protein sequence, read N- to C-terminus: Glycine--tRNA ligase beta subunit (689 aa).

This sequence belongs to the class-II aminoacyl-tRNA synthetase family. In terms of assembly, tetramer of two alpha and two beta subunits.

The protein resides in the cytoplasm. It carries out the reaction tRNA(Gly) + glycine + ATP = glycyl-tRNA(Gly) + AMP + diphosphate. The protein is Glycine--tRNA ligase beta subunit of Photorhabdus laumondii subsp. laumondii (strain DSM 15139 / CIP 105565 / TT01) (Photorhabdus luminescens subsp. laumondii).